The sequence spans 1416 residues: Phospholipid-transporting ATPase VD (1416 aa).

At 1 to 97 (MTELLQWARH…PRNLFEQFHR (97 aa)) the chain is on the cytoplasmic side. Residues 98–118 (AANLYFLFLVVLNWVPLVEAF) form a helical membrane-spanning segment. Topologically, residues 119–120 (QK) are exoplasmic loop. The helical transmembrane segment at 121–141 (EITMLPLVVVLTIIAIKDGLE) threads the bilayer. Residues 142–321 (DYRKYKIDKQ…SKLERRANTD (180 aa)) are Cytoplasmic-facing. The chain crosses the membrane as a helical span at residues 322 to 342 (VLWCVLLLIVMCLTGALGHGI). The Exoplasmic loop segment spans residues 343–365 (WLSRYENMLFFNIPEPDGRVISP). The helical transmembrane segment at 366–386 (VLTGFYVFWTMIILLQVLIPI) threads the bilayer. Topologically, residues 387-1110 (SLYVSIEIVK…HWCYTRLSNM (724 aa)) are cytoplasmic. The active-site 4-aspartylphosphate intermediate is D438. Residues D438, K439, and T440 each coordinate ATP. D438 serves as a coordination point for Mg(2+). Residue T440 coordinates Mg(2+). The segment at 498–544 (AQGCRTVPSGPLGKPSAQLSGSTSAVGNGEGSGEVPHSRQAAFSSPM) is disordered. Positions 514–523 (AQLSGSTSAV) are enriched in polar residues. E729, F771, K795, R838, T918, G919, and D920 together coordinate ATP. The disordered stretch occupies residues 971–990 (PELASSRKNFPQPSDAQGQG). The span at 976–987 (SRKNFPQPSDAQ) shows a compositional bias: polar residues. ATP-binding positions include 993 to 1000 (GLVITGKT), R1027, and K1033. D1053 serves as a coordination point for Mg(2+). The ATP site is built by N1056 and D1057. D1057 contributes to the Mg(2+) binding site. The chain crosses the membrane as a helical span at residues 1111–1131 (ILYFFYKNVAYVNLLFWYQFF). Residues 1132-1142 (CGFSGTSMTDY) are Exoplasmic loop-facing. The helical transmembrane segment at 1143 to 1163 (WVLIFFNLLFTSVPPIIYGVL) threads the bilayer. At 1164–1192 (EKDVSAETLLQLPELYRSGQRSEEYLPLT) the chain is on the cytoplasmic side. The helical transmembrane segment at 1193–1213 (FWITLLDAFYQSLVCFFVPYF) threads the bilayer. Residues 1214 to 1221 (TYQGSDID) are Exoplasmic loop-facing. Residues 1222 to 1242 (IFTFGNPLNTAALFIILLHLV) traverse the membrane as a helical segment. Residues 1243 to 1252 (IESKSLTWIH) lie on the Cytoplasmic side of the membrane. Residues 1253–1273 (MLVTVGSILSYFFFALAFGAL) form a helical membrane-spanning segment. Over 1274–1289 (CVTCNPPSNPYGIMRK) the chain is Exoplasmic loop. Residues 1290–1310 (HMLDPVFYLVCVLTTFVALLP) form a helical membrane-spanning segment. The Cytoplasmic segment spans residues 1311–1416 (RFLYRVLQGS…ASKMTGSSAS (106 aa)). Residues 1358–1416 (SKHASQSAAMSGRPTPGSSAVLAMKSATVSTVEQSTRETALDRGCSEPGASKMTGSSAS) form a disordered region. 1361–1368 (ASQSAAMS) contributes to the ATP binding site. A compositionally biased stretch (basic and acidic residues) spans 1392–1402 (STRETALDRGC).

Belongs to the cation transport ATPase (P-type) (TC 3.A.3) family. Type IV subfamily. Component of a P4-ATPase flippase complex which consists of a catalytic alpha subunit ATP10A and an accessory beta subunit TMEM30A. Mg(2+) is required as a cofactor. Post-translationally, autophosphorylated at the conserved aspartate of the P-type ATPase signature sequence. As to expression, expressed at low amounts in liver, brain, testes, and kidney (at protein level). Expressed in placenta.

It is found in the cell membrane. The protein localises to the endoplasmic reticulum membrane. It catalyses the reaction ATP + H2O + phospholipidSide 1 = ADP + phosphate + phospholipidSide 2.. The enzyme catalyses a beta-D-glucosyl-(1&lt;-&gt;1')-N-acylsphing-4-enine(out) + ATP + H2O = a beta-D-glucosyl-(1&lt;-&gt;1')-N-acylsphing-4-enine(in) + ADP + phosphate + H(+). Catalytic component of a P4-ATPase flippase complex, which catalyzes the hydrolysis of ATP coupled to the transport of glucosylceramide (GlcCer) from the outer to the inner leaflet of the plasma membrane. The chain is Phospholipid-transporting ATPase VD (Atp10d) from Mus musculus (Mouse).